The chain runs to 372 residues: tRNA N6-adenosine threonylcarbamoyltransferase (372 aa).

Residues histidine 133, histidine 137, and tyrosine 154 each contribute to the a divalent metal cation site. Residues tyrosine 154–glycine 158, aspartate 186, glycine 201, glutamate 205, and asparagine 301 contribute to the substrate site. Position 330 (aspartate 330) interacts with a divalent metal cation.

The protein belongs to the KAE1 / TsaD family. Component of the EKC/KEOPS complex composed of at least BUD32, CGI121, GON7, KAE1 and PCC1; the whole complex dimerizes. The cofactor is a divalent metal cation.

Its subcellular location is the cytoplasm. It localises to the nucleus. It catalyses the reaction L-threonylcarbamoyladenylate + adenosine(37) in tRNA = N(6)-L-threonylcarbamoyladenosine(37) in tRNA + AMP + H(+). Its function is as follows. Component of the EKC/KEOPS complex that is required for the formation of a threonylcarbamoyl group on adenosine at position 37 (t(6)A37) in tRNAs that read codons beginning with adenine. The complex is probably involved in the transfer of the threonylcarbamoyl moiety of threonylcarbamoyl-AMP (TC-AMP) to the N6 group of A37. KAE1 likely plays a direct catalytic role in this reaction, but requires other protein(s) of the complex to fulfill this activity. The EKC/KEOPS complex also promotes both telomere uncapping and telomere elongation. The complex is required for efficient recruitment of transcriptional coactivators. In Candida albicans (strain SC5314 / ATCC MYA-2876) (Yeast), this protein is tRNA N6-adenosine threonylcarbamoyltransferase.